We begin with the raw amino-acid sequence, 22 residues long: Alpha-amylase inhibitor DR4 (22 aa).

The interval 1 to 22 (SGGGKEAAETFNRVESHPRPDA) is disordered.

Functionally, inhibits insect alpha-amylases. The sequence is that of Alpha-amylase inhibitor DR4 from Delonix regia (Royal poinciana).